The primary structure comprises 386 residues: MNIHEYQAKEILRKYGVPTSTGLVVTKTEKINDTIDKLNTEVYVVKAQIHAGGRGKAGGVKVVKSKEEAKKVAHDMFGINLVTHQTGPQGQKVNRLYIESGCDILKEYYFSIVFDRSASCITFIASTEGGVDIEEIAEKTPEKIIKFSVDPATGLQDFHMRGIAYELGFKDNQAKQMKEIVKSVYNAFIETDATQIEINPLIVNSDGNLLALDAKITFDDNGLFQHPNITAMRDHDEEDPLETRAANAGLSYVKMDGNIGCMVNGAGLAMATMDIIKLYGASPANFLDVGGGADRERIKEALKIILSDKEVQGILVNIFGGIMRCDIIAEGIIAAAKDIGIKVPLVVRLAGTNVEKGKEILSNSGLEIIPAHDLADAANKIVEAIR.

One can recognise an ATP-grasp domain in the interval 9–244; it reads KEILRKYGVP…HDEEDPLETR (236 aa). Residues Lys-46, 53 to 55, Glu-99, Cys-102, and Glu-107 each bind ATP; that span reads GRG. Mg(2+)-binding residues include Asn-199 and Asp-213. Substrate-binding positions include Asn-264 and 321–323; that span reads GIM.

The protein belongs to the succinate/malate CoA ligase beta subunit family. As to quaternary structure, heterotetramer of two alpha and two beta subunits. Mg(2+) is required as a cofactor.

The catalysed reaction is succinate + ATP + CoA = succinyl-CoA + ADP + phosphate. The enzyme catalyses GTP + succinate + CoA = succinyl-CoA + GDP + phosphate. The protein operates within carbohydrate metabolism; tricarboxylic acid cycle; succinate from succinyl-CoA (ligase route): step 1/1. Succinyl-CoA synthetase functions in the citric acid cycle (TCA), coupling the hydrolysis of succinyl-CoA to the synthesis of either ATP or GTP and thus represents the only step of substrate-level phosphorylation in the TCA. The beta subunit provides nucleotide specificity of the enzyme and binds the substrate succinate, while the binding sites for coenzyme A and phosphate are found in the alpha subunit. This is Succinate--CoA ligase [ADP-forming] subunit beta from Rickettsia massiliae (strain Mtu5).